The primary structure comprises 392 residues: Alkaline phosphatase L (392 aa).

The signal sequence occupies residues 1 to 23 (MYKRSLIAASLSVAALVSAQAMA).

It belongs to the PstS family. Homodimer.

It localises to the secreted. Its subcellular location is the periplasm. It catalyses the reaction a phosphate monoester + H2O = an alcohol + phosphate. Its function is as follows. Has both a phosphomonoesterase and phosphodiesterase activity. The polypeptide is Alkaline phosphatase L (Pseudomonas aeruginosa).